We begin with the raw amino-acid sequence, 222 residues long: Germin-like protein subfamily 1 member 20 (222 aa).

The signal sequence occupies residues 1 to 22; that stretch reads MRVSQSLVPFAIIALVLSFVNA. Cys-32 and Cys-48 are oxidised to a cystine. A Cupin type-1 domain is found at 62–213; sequence SGLNVPGNTN…AFQLDASVVK (152 aa). N-linked (GlcNAc...) asparagine glycosylation occurs at Asn-77. His-110, His-112, Glu-117, and His-159 together coordinate Mn(2+).

The protein belongs to the germin family. In terms of assembly, oligomer (believed to be a pentamer but probably hexamer). As to expression, expressed in stems and developing embryos.

The protein resides in the secreted. It localises to the extracellular space. The protein localises to the apoplast. Functionally, may play a role in plant defense. Probably has no oxalate oxidase activity even if the active site is conserved. The sequence is that of Germin-like protein subfamily 1 member 20 (GLP5A) from Arabidopsis thaliana (Mouse-ear cress).